We begin with the raw amino-acid sequence, 414 residues long: eIF5-mimic protein 1 (414 aa).

The disordered stretch occupies residues 1-22; sequence MNKNQKPVLTGQRFKTRKRDEK. The 167-residue stretch at 248–414 folds into the W2 domain; it reads VQQSLGTRKE…LQNAEEEFRI (167 aa).

It belongs to the BZW family.

Its subcellular location is the cytoplasm. Translation initiation regulator which may repress non-AUG initiated translation and repeat-associated non-AUG (RAN) initiated translation by acting as a competitive inhibitor of eukaryotic translation initiation factor 5 (EIF5) function. The polypeptide is eIF5-mimic protein 1 (BZW2) (Gallus gallus (Chicken)).